The sequence spans 388 residues: NADPH-dependent butanol dehydrogenase (388 aa).

The protein belongs to the iron-containing alcohol dehydrogenase family.

Functionally, this enzyme has activity using butanol and ethanol as substrates. This Clostridium saccharobutylicum protein is NADPH-dependent butanol dehydrogenase (adh1).